Consider the following 658-residue polypeptide: MNQQQRMTAVGTDKELSDLLDFSMMFPLPVANGKTRPTTLASTQFGGGSGLEERTGSAPWGTEDHNGSTFDQGRGYGDGTHYGEHRELPSHEGNLSAPFLASGLVGKNDRPPYSTFGRDSGMTMNQTGFLSGDLAMNSPSALSPNAGKAGSQYYTYPNNSRRRPGDSNLDAQPKKVRKVPPGLPSSVYPANSGDEYCGDRGSYASTKTPNSVYPGAFYMADGLHSSDIWASSGGIGQGGYSSVLNSSQSSVSQTTGFSSLHPHERMGFPMHSGEVNPSVTSSFSSTPAQYGVSSHTPPISTGDTIIGNRGTATGSSGDALGKALASIYSPDHSSTNFSSTPSTPVGSPQGITGSGQWPRANGPGALSPSYDGTLHTLQNKMEDRLDEAIHVLRSHAVGQTGALPGGHDDIHSLLSATASVLGSGFPAAVLSLANRHSMLNSHTEEALPSASNMLHSQVTVPAQPGSLPDLTRPQDSYSGLPGLGRAIPPGRVPDIKRESKEDEENRSVADLSDDEKKESKPQRSRTRCSINSQDEDEDEDDDNLPPEQKAEREKERRVANNARERLRVKDINEAFKELGRMCQLHLNSEKPQTKLLILHQAVSVILSLEQQVRERNLNPKAACLKRREEEKVSGVDPQMGLSGGHPGVGDSHNPVGHM.

Disordered stretches follow at residues 42–82, 140–191, 276–313, 331–372, 460–558, and 628–658; these read STQF…GTHY, SALS…YPAN, NPSVTSSFSSTPAQYGVSSHTPPISTGDTIIGNRGTAT, DHSS…SYDG, VPAQ…ERRV, and EEEKVSGVDPQMGLSGGHPGVGDSHNPVGHM. The Nuclear localization signal motif lies at 173–179; that stretch reads PKKVRKV. Residues 276-303 show a composition bias toward polar residues; it reads NPSVTSSFSSTPAQYGVSSHTPPISTGD. Residues 333-344 show a composition bias toward low complexity; the sequence is SSTNFSSTPSTP. Residues 345-355 are compositionally biased toward polar residues; it reads VGSPQGITGSG. Over residues 493-507 the composition is skewed to basic and acidic residues; that stretch reads PDIKRESKEDEENRS. The segment covering 533–544 has biased composition (acidic residues); it reads QDEDEDEDDDNL. The segment covering 548 to 558 has biased composition (basic and acidic residues); sequence QKAEREKERRV. The 54-residue stretch at 555 to 608 folds into the bHLH domain; the sequence is ERRVANNARERLRVKDINEAFKELGRMCQLHLNSEKPQTKLLILHQAVSVILSL.

In terms of assembly, homodimer. Heterodimer; efficient DNA binding requires dimerization with another bHLH protein. Interacts with tgfb1i1.

It is found in the nucleus. In terms of biological role, transcriptional regulator involved in the initiation of neuronal differentiation and mesenchymal to epithelial transition. Heterodimers between tcf3 and tissue-specific basic helix-loop-helix (bHLH) proteins play major roles in determining tissue-specific cell fate during embryogenesis, like muscle or early B-cell differentiation. Together with tcf15, required for the mesenchymal to epithelial transition. Dimers bind DNA on E-box motifs: 5'-CANNTG-3'. The protein is Transcription factor E2-alpha (tcf3) of Xenopus laevis (African clawed frog).